Consider the following 365-residue polypeptide: S-adenosylmethionine decarboxylase proenzyme (365 aa).

Residues Glu-31 and Glu-34 contribute to the active site. Ser-87 (schiff-base intermediate with substrate; via pyruvic acid) is an active-site residue. Ser-87 bears the Pyruvic acid (Ser); by autocatalysis mark. The active-site Proton donor; for catalytic activity is Cys-101. Active-site proton acceptor; for processing activity residues include Ser-248 and His-263.

Belongs to the eukaryotic AdoMetDC family. Heterotetramer of two alpha and two beta chains. Pyruvate is required as a cofactor. Is synthesized initially as an inactive proenzyme. Formation of the active enzyme involves a self-maturation process in which the active site pyruvoyl group is generated from an internal serine residue via an autocatalytic post-translational modification. Two non-identical subunits are generated from the proenzyme in this reaction, and the pyruvate is formed at the N-terminus of the alpha chain, which is derived from the carboxyl end of the proenzyme. The post-translation cleavage follows an unusual pathway, termed non-hydrolytic serinolysis, in which the side chain hydroxyl group of the serine supplies its oxygen atom to form the C-terminus of the beta chain, while the remainder of the serine residue undergoes an oxidative deamination to produce ammonia and the pyruvoyl group blocking the N-terminus of the alpha chain.

It catalyses the reaction S-adenosyl-L-methionine + H(+) = S-adenosyl 3-(methylsulfanyl)propylamine + CO2. The protein operates within amine and polyamine biosynthesis; S-adenosylmethioninamine biosynthesis; S-adenosylmethioninamine from S-adenosyl-L-methionine: step 1/1. The chain is S-adenosylmethionine decarboxylase proenzyme (smd-1) from Onchocerca volvulus.